Consider the following 133-residue polypeptide: Large ribosomal subunit protein bL17 (133 aa).

It belongs to the bacterial ribosomal protein bL17 family. In terms of assembly, part of the 50S ribosomal subunit. Contacts protein L32.

The polypeptide is Large ribosomal subunit protein bL17 (Polaromonas naphthalenivorans (strain CJ2)).